The chain runs to 323 residues: Acetyl-coenzyme A carboxylase carboxyl transferase subunit alpha (323 aa).

The CoA carboxyltransferase C-terminal domain occupies 40–293 (LSEKSLQLTK…RKALSDSLKT (254 aa)).

The protein belongs to the AccA family. In terms of assembly, acetyl-CoA carboxylase is a heterohexamer composed of biotin carboxyl carrier protein (AccB), biotin carboxylase (AccC) and two subunits each of ACCase subunit alpha (AccA) and ACCase subunit beta (AccD).

It localises to the cytoplasm. The enzyme catalyses N(6)-carboxybiotinyl-L-lysyl-[protein] + acetyl-CoA = N(6)-biotinyl-L-lysyl-[protein] + malonyl-CoA. The protein operates within lipid metabolism; malonyl-CoA biosynthesis; malonyl-CoA from acetyl-CoA: step 1/1. In terms of biological role, component of the acetyl coenzyme A carboxylase (ACC) complex. First, biotin carboxylase catalyzes the carboxylation of biotin on its carrier protein (BCCP) and then the CO(2) group is transferred by the carboxyltransferase to acetyl-CoA to form malonyl-CoA. The sequence is that of Acetyl-coenzyme A carboxylase carboxyl transferase subunit alpha from Polynucleobacter asymbioticus (strain DSM 18221 / CIP 109841 / QLW-P1DMWA-1) (Polynucleobacter necessarius subsp. asymbioticus).